The following is a 253-amino-acid chain: Ditrans,polycis-undecaprenyl-diphosphate synthase ((2E,6E)-farnesyl-diphosphate specific) (253 aa).

D25 is a catalytic residue. D25 contributes to the Mg(2+) binding site. Substrate is bound by residues 26 to 29 (GNGR), W30, R38, H42, and 70 to 72 (SSE). The active-site Proton acceptor is the N73. W74, R76, and R193 together coordinate substrate. Position 198 (H198) interacts with Mg(2+). Substrate is bound at residue 199-201 (RIS). A Mg(2+)-binding site is contributed by E212.

The protein belongs to the UPP synthase family. Homodimer. The cofactor is Mg(2+).

It catalyses the reaction 8 isopentenyl diphosphate + (2E,6E)-farnesyl diphosphate = di-trans,octa-cis-undecaprenyl diphosphate + 8 diphosphate. Its function is as follows. Catalyzes the sequential condensation of isopentenyl diphosphate (IPP) with (2E,6E)-farnesyl diphosphate (E,E-FPP) to yield (2Z,6Z,10Z,14Z,18Z,22Z,26Z,30Z,34E,38E)-undecaprenyl diphosphate (di-trans,octa-cis-UPP). UPP is the precursor of glycosyl carrier lipid in the biosynthesis of bacterial cell wall polysaccharide components such as peptidoglycan and lipopolysaccharide. This Pectobacterium atrosepticum (strain SCRI 1043 / ATCC BAA-672) (Erwinia carotovora subsp. atroseptica) protein is Ditrans,polycis-undecaprenyl-diphosphate synthase ((2E,6E)-farnesyl-diphosphate specific).